A 121-amino-acid polypeptide reads, in one-letter code: Phosphoribosyl-ATP pyrophosphatase (121 aa).

This sequence belongs to the PRA-PH family.

It is found in the cytoplasm. The enzyme catalyses 1-(5-phospho-beta-D-ribosyl)-ATP + H2O = 1-(5-phospho-beta-D-ribosyl)-5'-AMP + diphosphate + H(+). It participates in amino-acid biosynthesis; L-histidine biosynthesis; L-histidine from 5-phospho-alpha-D-ribose 1-diphosphate: step 2/9. The chain is Phosphoribosyl-ATP pyrophosphatase from Nitrosospira multiformis (strain ATCC 25196 / NCIMB 11849 / C 71).